Here is a 320-residue protein sequence, read N- to C-terminus: tRNA U34 carboxymethyltransferase (320 aa).

Carboxy-S-adenosyl-L-methionine is bound by residues Lys-89, Trp-103, Lys-108, Gly-128, 150 to 152 (DPT), 179 to 180 (IE), Met-194, Tyr-198, and Arg-313.

This sequence belongs to the class I-like SAM-binding methyltransferase superfamily. CmoB family. In terms of assembly, homotetramer.

It catalyses the reaction carboxy-S-adenosyl-L-methionine + 5-hydroxyuridine(34) in tRNA = 5-carboxymethoxyuridine(34) in tRNA + S-adenosyl-L-homocysteine + H(+). Catalyzes carboxymethyl transfer from carboxy-S-adenosyl-L-methionine (Cx-SAM) to 5-hydroxyuridine (ho5U) to form 5-carboxymethoxyuridine (cmo5U) at position 34 in tRNAs. The protein is tRNA U34 carboxymethyltransferase of Actinobacillus pleuropneumoniae serotype 3 (strain JL03).